The following is a 131-amino-acid chain: Small ribosomal subunit protein uS8 (131 aa).

Belongs to the universal ribosomal protein uS8 family. Part of the 30S ribosomal subunit. Contacts proteins S5 and S12.

Functionally, one of the primary rRNA binding proteins, it binds directly to 16S rRNA central domain where it helps coordinate assembly of the platform of the 30S subunit. In Hyphomonas neptunium (strain ATCC 15444), this protein is Small ribosomal subunit protein uS8.